The chain runs to 180 residues: MGIPVGKSMLVLLISLAFALCCIAAYRPSETLCGGELVDTLQFVCSDRGFYFSRPSSRANRRSRGIVEECCFRSCDLALLETYCATPAKSERDVSTSQAVLPDDFPRYPVGKFFKFDTWRQSAGRLRRGLPALLRARRGRMLAKELEAFREAKRHRPLIVLPPKDPAHGGASSEMSSNHQ.

An N-terminal signal peptide occupies residues 1–24 (MGIPVGKSMLVLLISLAFALCCIA). A b region spans residues 25 to 52 (AYRPSETLCGGELVDTLQFVCSDRGFYF). 3 disulfide bridges follow: C33–C71, C45–C84, and C70–C75. The interval 53–64 (SRPSSRANRRSR) is c. The a stretch occupies residues 65 to 85 (GIVEECCFRSCDLALLETYCA). The interval 86-91 (TPAKSE) is d. Positions 92–180 (RDVSTSQAVL…ASSEMSSNHQ (89 aa)) are cleaved as a propeptide — e peptide. The segment at 160-180 (VLPPKDPAHGGASSEMSSNHQ) is disordered.

The protein belongs to the insulin family. In terms of assembly, interacts with MYORG; this interaction is required for IGF2 secretion. Interacts with integrins ITGAV:ITGB3 and ITGA6:ITGB4; integrin-binding is required for IGF2 signaling. Interacts with IGFBP2. In terms of processing, proteolytically processed by PCSK4, proIGF2 is cleaved at Arg-128 and Arg-92 to generate big-IGF2 and mature IGF2.

The protein resides in the secreted. In terms of biological role, the insulin-like growth factors possess growth-promoting activity. Major fetal growth hormone in mammals. Plays a key role in regulating fetoplacental development. IGF2 is influenced by placental lactogen. Also involved in tissue differentiation. In adults, involved in glucose metabolism in adipose tissue, skeletal muscle and liver. Acts as a ligand for integrin which is required for IGF2 signaling. Positively regulates myogenic transcription factor MYOD1 function by facilitating the recruitment of transcriptional coactivators, thereby controlling muscle terminal differentiation. Inhibits myoblast differentiation and modulates metabolism via increasing the mitochondrial respiration rate. Preptin undergoes glucose-mediated co-secretion with insulin, and acts as a physiological amplifier of glucose-mediated insulin secretion. Exhibits osteogenic properties by increasing osteoblast mitogenic activity through phosphoactivation of MAPK1 and MAPK3. The protein is Insulin-like growth factor 2 of Rattus norvegicus (Rat).